We begin with the raw amino-acid sequence, 203 residues long: Large ribosomal subunit protein bL25 (203 aa).

Belongs to the bacterial ribosomal protein bL25 family. CTC subfamily. In terms of assembly, part of the 50S ribosomal subunit; part of the 5S rRNA/L5/L18/L25 subcomplex. Contacts the 5S rRNA. Binds to the 5S rRNA independently of L5 and L18.

This is one of the proteins that binds to the 5S RNA in the ribosome where it forms part of the central protuberance. This is Large ribosomal subunit protein bL25 from Pseudomonas syringae pv. tomato (strain ATCC BAA-871 / DC3000).